A 267-amino-acid chain; its full sequence is 2-keto-3-deoxy-L-rhamnonate aldolase (267 aa).

H49 serves as the catalytic Proton acceptor. Position 151 (Q151) interacts with substrate. A Mg(2+)-binding site is contributed by E153. Substrate is bound by residues A178 and D179. Mg(2+) is bound at residue D179.

It belongs to the HpcH/HpaI aldolase family. KDR aldolase subfamily. Homohexamer. Mg(2+) is required as a cofactor.

It catalyses the reaction 2-dehydro-3-deoxy-L-rhamnonate = (S)-lactaldehyde + pyruvate. Catalyzes the reversible retro-aldol cleavage of 2-keto-3-deoxy-L-rhamnonate (KDR) to pyruvate and lactaldehyde. This chain is 2-keto-3-deoxy-L-rhamnonate aldolase, found in Salmonella paratyphi A (strain ATCC 9150 / SARB42).